The primary structure comprises 286 residues: Protein HEXIM2 (286 aa).

Positions 1 to 11 (MMATPNQTACN) are enriched in polar residues. The segment at 1 to 195 (MMATPNQTAC…GEFQRKDFSE (195 aa)) is disordered. Ser-29 is subject to Phosphoserine. Phosphothreonine is present on Thr-32. The residue at position 39 (Ser-39) is a Phosphoserine. Thr-46 is modified (phosphothreonine). Residues Ser-51, Ser-53, Ser-71, Ser-76, and Ser-81 each carry the phosphoserine modification. The span at 68 to 78 (NSRSPRTQSPG) shows a compositional bias: polar residues. The span at 87–103 (ARKKHRRRPSKRKRHWR) shows a compositional bias: basic residues. Basic and acidic residues predominate over residues 113–132 (KQQRDERQSQRASRVREEMF). The segment at 140–143 (PYNT) is interaction with P-TEFb. Residues 178 to 195 (SDGRGRAHGEFQRKDFSE) show a composition bias toward basic and acidic residues. The stretch at 207-277 (GRSKQELVRD…QENQMWNREG (71 aa)) forms a coiled coil. The interaction with CCNT1, HEXIM1 and HEXIM2 stretch occupies residues 226–286 (QAEEETRRLQ…GCRCDEEPGT (61 aa)).

This sequence belongs to the HEXIM family. Homooligomer and heterooligomer with HEXIM1; probably dimeric. Core component of the 7SK RNP complex, at least composed of 7SK RNA, LARP7, MEPCE, HEXIM1 (or HEXIM2) and P-TEFb (composed of CDK9 and CCNT1/cyclin-T1). Interacts with CCNT2. As to expression, ubiquitously expressed with higher expression in testis. HEXIM1 and HEXIM2 are differentially expressed.

It localises to the nucleus. Its function is as follows. Transcriptional regulator which functions as a general RNA polymerase II transcription inhibitor. Core component of the 7SK RNP complex: in cooperation with 7SK snRNA sequesters P-TEFb in a large inactive 7SK snRNP complex preventing RNA polymerase II phosphorylation and subsequent transcriptional elongation. The protein is Protein HEXIM2 (HEXIM2) of Homo sapiens (Human).